Here is a 480-residue protein sequence, read N- to C-terminus: 3-isopropylmalate dehydratase large subunit (480 aa).

Residues Cys-357, Cys-417, and Cys-420 each contribute to the [4Fe-4S] cluster site. Positions 431–441 are enriched in polar residues; it reads GQRCASTSNRN. The segment at 431-454 is disordered; that stretch reads GQRCASTSNRNFEGRQGKGGRTHL.

The protein belongs to the aconitase/IPM isomerase family. LeuC type 1 subfamily. As to quaternary structure, heterodimer of LeuC and LeuD. It depends on [4Fe-4S] cluster as a cofactor.

The catalysed reaction is (2R,3S)-3-isopropylmalate = (2S)-2-isopropylmalate. Its pathway is amino-acid biosynthesis; L-leucine biosynthesis; L-leucine from 3-methyl-2-oxobutanoate: step 2/4. Catalyzes the isomerization between 2-isopropylmalate and 3-isopropylmalate, via the formation of 2-isopropylmaleate. The polypeptide is 3-isopropylmalate dehydratase large subunit (Mycobacteroides abscessus (strain ATCC 19977 / DSM 44196 / CCUG 20993 / CIP 104536 / JCM 13569 / NCTC 13031 / TMC 1543 / L948) (Mycobacterium abscessus)).